Reading from the N-terminus, the 502-residue chain is Ribose import ATP-binding protein RbsA (502 aa).

ABC transporter domains follow at residues 3–239 (VTMR…VGRE) and 249–493 (AAPG…TGGA). 35 to 42 (GENGAGKS) provides a ligand contact to ATP.

Belongs to the ABC transporter superfamily. Ribose importer (TC 3.A.1.2.1) family. As to quaternary structure, the complex is composed of an ATP-binding protein (RbsA), two transmembrane proteins (RbsC) and a solute-binding protein (RbsB).

The protein localises to the cell inner membrane. It carries out the reaction D-ribose(out) + ATP + H2O = D-ribose(in) + ADP + phosphate + H(+). Its function is as follows. Part of the ABC transporter complex RbsABC involved in ribose import. Responsible for energy coupling to the transport system. The protein is Ribose import ATP-binding protein RbsA of Chromobacterium violaceum (strain ATCC 12472 / DSM 30191 / JCM 1249 / CCUG 213 / NBRC 12614 / NCIMB 9131 / NCTC 9757 / MK).